The chain runs to 192 residues: MSIQNEMPGYNDVDQLLNQQGVGLTPAEMHGLISGLLCGGNTDSSWLPMVHDLTNEGLAFGHELAQALRNMHSAISDSLDDDGFLFQLYLPEGDAVSVFDRADALAGWVNHFLLGLGVSQPKLDKVKDETGEAIDDLRNIAQLGYDEDEDQEELEMSLEEIIEYVRVAALLCHDTFSRQQPTAPEVRKPTLH.

The protein belongs to the UPF0149 family.

In Klebsiella pneumoniae (strain 342), this protein is UPF0149 protein KPK_0755.